We begin with the raw amino-acid sequence, 304 residues long: Non-specific ribonucleoside hydrolase RihC (304 aa).

Histidine 233 is an active-site residue.

Belongs to the IUNH family. RihC subfamily.

Its function is as follows. Hydrolyzes both purine and pyrimidine ribonucleosides with a broad-substrate specificity. In Shigella boydii serotype 18 (strain CDC 3083-94 / BS512), this protein is Non-specific ribonucleoside hydrolase RihC.